We begin with the raw amino-acid sequence, 406 residues long: Olfactomedin-like protein 3 (406 aa).

The first 21 residues, 1 to 21, serve as a signal peptide directing secretion; sequence MGPSTPLLILFLLSWSGPLQG. Residues 25 to 101 are a coiled coil; sequence HLVEYMERRL…REVDYLETQN (77 aa). The 268-residue stretch at 134–401 folds into the Olfactomedin-like domain; that stretch reads DCGYTISQVR…QIVYKLEMRK (268 aa). An intrachain disulfide couples cysteine 135 to cysteine 328. Residues asparagine 177 and asparagine 248 are each glycosylated (N-linked (GlcNAc...) asparagine).

The protein belongs to the OLFML3 family. As to expression, abundant in placenta, moderate in liver and heart, whereas fairly weak in other tissues examined. On term placenta, mainly localized extracellularly surrounding the syncytiotrophoblastic cells and very rarely expressed in the maternal decidua layer.

The protein localises to the secreted. Functionally, secreted scaffold protein that plays an essential role in dorsoventral patterning during early development. Stabilizes axial formation by restricting chordin (CHRD) activity on the dorsal side. Acts by facilitating the association between the tolloid proteases and their substrate chordin (CHRD), leading to enhance chordin (CHRD) degradation. May have matrix-related function involved in placental and embryonic development, or play a similar role in other physiological processes. The protein is Olfactomedin-like protein 3 (OLFML3) of Homo sapiens (Human).